A 372-amino-acid chain; its full sequence is DNA replication and repair protein RecF (372 aa).

Position 30 to 37 (G30 to T37) interacts with ATP.

This sequence belongs to the RecF family.

The protein resides in the cytoplasm. Its function is as follows. The RecF protein is involved in DNA metabolism; it is required for DNA replication and normal SOS inducibility. RecF binds preferentially to single-stranded, linear DNA. It also seems to bind ATP. This is DNA replication and repair protein RecF from Shouchella clausii (strain KSM-K16) (Alkalihalobacillus clausii).